The chain runs to 125 residues: uncharacterized protein (125 aa).

This is an uncharacterized protein from Aquifex aeolicus (strain VF5).